The chain runs to 509 residues: ATP synthase subunit beta (509 aa).

The segment at 1–28 (MAKAATPKETAAAKKPAAPKKAASAKTA) is disordered. Position 187 to 194 (187 to 194 (GGAGVGKT)) interacts with ATP.

It belongs to the ATPase alpha/beta chains family. F-type ATPases have 2 components, CF(1) - the catalytic core - and CF(0) - the membrane proton channel. CF(1) has five subunits: alpha(3), beta(3), gamma(1), delta(1), epsilon(1). CF(0) has three main subunits: a(1), b(2) and c(9-12). The alpha and beta chains form an alternating ring which encloses part of the gamma chain. CF(1) is attached to CF(0) by a central stalk formed by the gamma and epsilon chains, while a peripheral stalk is formed by the delta and b chains.

The protein resides in the cell inner membrane. The catalysed reaction is ATP + H2O + 4 H(+)(in) = ADP + phosphate + 5 H(+)(out). In terms of biological role, produces ATP from ADP in the presence of a proton gradient across the membrane. The catalytic sites are hosted primarily by the beta subunits. The chain is ATP synthase subunit beta from Sinorhizobium medicae (strain WSM419) (Ensifer medicae).